We begin with the raw amino-acid sequence, 607 residues long: Threonine--tRNA ligase (607 aa).

Positions 200 to 502 are catalytic; it reads DHRKLGRELG…LIEEYAGDFP (303 aa). Zn(2+) contacts are provided by C299, H350, and H479.

It belongs to the class-II aminoacyl-tRNA synthetase family. As to quaternary structure, homodimer. Requires Zn(2+) as cofactor.

It localises to the cytoplasm. It catalyses the reaction tRNA(Thr) + L-threonine + ATP = L-threonyl-tRNA(Thr) + AMP + diphosphate + H(+). Its function is as follows. Catalyzes the attachment of threonine to tRNA(Thr) in a two-step reaction: L-threonine is first activated by ATP to form Thr-AMP and then transferred to the acceptor end of tRNA(Thr). Also edits incorrectly charged L-seryl-tRNA(Thr). This chain is Threonine--tRNA ligase, found in Synechococcus sp. (strain ATCC 27144 / PCC 6301 / SAUG 1402/1) (Anacystis nidulans).